The primary structure comprises 94 residues: DNA-directed RNA polymerase subunit omega (94 aa).

Belongs to the RNA polymerase subunit omega family. In terms of assembly, the RNAP catalytic core consists of 2 alpha, 1 beta, 1 beta' and 1 omega subunit. When a sigma factor is associated with the core the holoenzyme is formed, which can initiate transcription.

The enzyme catalyses RNA(n) + a ribonucleoside 5'-triphosphate = RNA(n+1) + diphosphate. Its function is as follows. Promotes RNA polymerase assembly. Latches the N- and C-terminal regions of the beta' subunit thereby facilitating its interaction with the beta and alpha subunits. The polypeptide is DNA-directed RNA polymerase subunit omega (Parafrankia sp. (strain EAN1pec)).